The following is a 165-amino-acid chain: Nucleotide-binding protein PMM0481 (165 aa).

It belongs to the YajQ family.

Its function is as follows. Nucleotide-binding protein. This chain is Nucleotide-binding protein PMM0481, found in Prochlorococcus marinus subsp. pastoris (strain CCMP1986 / NIES-2087 / MED4).